The following is a 209-amino-acid chain: Molybdenum cofactor guanylyltransferase (209 aa).

GTP-binding positions include 13-15, Lys26, Asn54, Asp74, and Asp104; that span reads LAG. Asp104 lines the Mg(2+) pocket.

Belongs to the MobA family. In terms of assembly, monomer. The cofactor is Mg(2+).

It localises to the cytoplasm. The enzyme catalyses Mo-molybdopterin + GTP + H(+) = Mo-molybdopterin guanine dinucleotide + diphosphate. Its function is as follows. Transfers a GMP moiety from GTP to Mo-molybdopterin (Mo-MPT) cofactor (Moco or molybdenum cofactor) to form Mo-molybdopterin guanine dinucleotide (Mo-MGD) cofactor. This chain is Molybdenum cofactor guanylyltransferase, found in Acinetobacter baumannii (strain ACICU).